Consider the following 189-residue polypeptide: dCTP deaminase (189 aa).

Residues 112–117 (KSTYAR), 136–138 (TLE), glutamine 157, tyrosine 171, and glutamine 181 contribute to the dCTP site. Glutamate 138 acts as the Proton donor/acceptor in catalysis.

This sequence belongs to the dCTP deaminase family. Homotrimer.

The enzyme catalyses dCTP + H2O + H(+) = dUTP + NH4(+). It functions in the pathway pyrimidine metabolism; dUMP biosynthesis; dUMP from dCTP (dUTP route): step 1/2. Functionally, catalyzes the deamination of dCTP to dUTP. The chain is dCTP deaminase from Paraburkholderia phymatum (strain DSM 17167 / CIP 108236 / LMG 21445 / STM815) (Burkholderia phymatum).